Reading from the N-terminus, the 623-residue chain is Leucine aminopeptidase 2 (623 aa).

A peptide is bound by residues 136 to 138 (QCE) and 261 to 266 (PYGGME). Position 290 (H290) interacts with Zn(2+). Catalysis depends on E291, which acts as the Proton acceptor. Positions 294 and 313 each coordinate Zn(2+). Y391 serves as the catalytic Proton donor.

This sequence belongs to the peptidase M1 family. Zn(2+) serves as cofactor.

The protein localises to the cytoplasm. Its subcellular location is the nucleus. It catalyses the reaction an epoxide + H2O = an ethanediol. In terms of biological role, aminopeptidase that preferentially cleaves di- and tripeptides. Also has low epoxide hydrolase activity (in vitro). Can hydrolyze the epoxide leukotriene LTA(4) but it forms preferentially 5,6-dihydroxy-7,9,11,14-eicosatetraenoic acid rather than the cytokine leukotriene B(4) as the product compared to the homologous mammalian enzyme (in vitro). This chain is Leucine aminopeptidase 2 (LKH1), found in Candida albicans (strain SC5314 / ATCC MYA-2876) (Yeast).